A 211-amino-acid chain; its full sequence is Thiamine-phosphate synthase (211 aa).

4-amino-2-methyl-5-(diphosphooxymethyl)pyrimidine contacts are provided by residues 37–41 (QLRIK) and N69. Mg(2+) is bound by residues D70 and D89. 4-amino-2-methyl-5-(diphosphooxymethyl)pyrimidine is bound at residue S108. 134 to 136 (TQT) contacts 2-[(2R,5Z)-2-carboxy-4-methylthiazol-5(2H)-ylidene]ethyl phosphate. A 4-amino-2-methyl-5-(diphosphooxymethyl)pyrimidine-binding site is contributed by K137. 2-[(2R,5Z)-2-carboxy-4-methylthiazol-5(2H)-ylidene]ethyl phosphate is bound by residues G166 and 186–187 (VS).

It belongs to the thiamine-phosphate synthase family. Mg(2+) serves as cofactor.

It catalyses the reaction 2-[(2R,5Z)-2-carboxy-4-methylthiazol-5(2H)-ylidene]ethyl phosphate + 4-amino-2-methyl-5-(diphosphooxymethyl)pyrimidine + 2 H(+) = thiamine phosphate + CO2 + diphosphate. The catalysed reaction is 2-(2-carboxy-4-methylthiazol-5-yl)ethyl phosphate + 4-amino-2-methyl-5-(diphosphooxymethyl)pyrimidine + 2 H(+) = thiamine phosphate + CO2 + diphosphate. The enzyme catalyses 4-methyl-5-(2-phosphooxyethyl)-thiazole + 4-amino-2-methyl-5-(diphosphooxymethyl)pyrimidine + H(+) = thiamine phosphate + diphosphate. It participates in cofactor biosynthesis; thiamine diphosphate biosynthesis; thiamine phosphate from 4-amino-2-methyl-5-diphosphomethylpyrimidine and 4-methyl-5-(2-phosphoethyl)-thiazole: step 1/1. Its function is as follows. Condenses 4-methyl-5-(beta-hydroxyethyl)thiazole monophosphate (THZ-P) and 2-methyl-4-amino-5-hydroxymethyl pyrimidine pyrophosphate (HMP-PP) to form thiamine monophosphate (TMP). The sequence is that of Thiamine-phosphate synthase from Salmonella choleraesuis (strain SC-B67).